The primary structure comprises 571 residues: Dihydroxy-acid dehydratase (571 aa).

Cys56 is a binding site for [2Fe-2S] cluster. Asp88 is a binding site for Mg(2+). Cys129 is a binding site for [2Fe-2S] cluster. Mg(2+) contacts are provided by Asp130 and Lys131. Lys131 bears the N6-carboxylysine mark. Cys201 contributes to the [2Fe-2S] cluster binding site. Glu452 is a Mg(2+) binding site. The active-site Proton acceptor is Ser478.

Belongs to the IlvD/Edd family. Homodimer. It depends on [2Fe-2S] cluster as a cofactor. Requires Mg(2+) as cofactor.

It catalyses the reaction (2R)-2,3-dihydroxy-3-methylbutanoate = 3-methyl-2-oxobutanoate + H2O. The enzyme catalyses (2R,3R)-2,3-dihydroxy-3-methylpentanoate = (S)-3-methyl-2-oxopentanoate + H2O. Its pathway is amino-acid biosynthesis; L-isoleucine biosynthesis; L-isoleucine from 2-oxobutanoate: step 3/4. It functions in the pathway amino-acid biosynthesis; L-valine biosynthesis; L-valine from pyruvate: step 3/4. Functions in the biosynthesis of branched-chain amino acids. Catalyzes the dehydration of (2R,3R)-2,3-dihydroxy-3-methylpentanoate (2,3-dihydroxy-3-methylvalerate) into 2-oxo-3-methylpentanoate (2-oxo-3-methylvalerate) and of (2R)-2,3-dihydroxy-3-methylbutanoate (2,3-dihydroxyisovalerate) into 2-oxo-3-methylbutanoate (2-oxoisovalerate), the penultimate precursor to L-isoleucine and L-valine, respectively. This is Dihydroxy-acid dehydratase from Streptococcus mutans serotype c (strain ATCC 700610 / UA159).